The following is a 3416-amino-acid chain: Genome polyprotein (3416 aa).

The segment at 1–34 (MAKGAVLKGKGGGPPRRVPKETAKKTRQGPGRLP) is disordered. Topologically, residues 1–99 (MAKGAVLKGK…NKRRGKRRST (99 aa)) are cytoplasmic. The propeptide at 97-117 (RSTTGLLTPILLACLATLVFS) is ER anchor for the capsid protein C, removed in mature form by serine protease NS3. Residues 100–120 (TGLLTPILLACLATLVFSATV) form a helical membrane-spanning segment. The Extracellular segment spans residues 121-243 (RRERTGNMVI…HLTRVEGWVW (123 aa)). Residue asparagine 145 is glycosylated (N-linked (GlcNAc...) asparagine; by host). Residues 244-261 (KNKFLTAAFCAVVWMVTD) form a helical membrane-spanning segment. Position 262 (serine 262) is a topological domain, cytoplasmic. The helical transmembrane segment at 263–281 (LPTRFIVITVALCLAPTYA) threads the bilayer. At 282–728 (TRCTHLQNRD…HTAFGAAFNT (447 aa)) the chain is on the extracellular side. Disulfide bonds link cysteine 284–cysteine 311, cysteine 341–cysteine 397, cysteine 341–cysteine 402, cysteine 355–cysteine 386, cysteine 373–cysteine 397, and cysteine 373–cysteine 402. A fusion peptide region spans residues 379 to 392 (DRGWGNHCGLFGKG). Asparagine 435 carries an N-linked (GlcNAc...) asparagine; by host glycan. Intrachain disulfides connect cysteine 467–cysteine 571 and cysteine 588–cysteine 619. A helical membrane pass occupies residues 729-749 (IFGGVGFLPRILLGVALAWLG). Over 750–756 (LNSRNPT) the chain is Cytoplasmic. The chain crosses the membrane as a helical span at residues 757–777 (LSVGFLITGGLVLTMTLGVGA). The Extracellular portion of the chain corresponds to 778 to 1134 (DMGCAIDANR…RSMVLADNGA (357 aa)). 6 cysteine pairs are disulfide-bonded: cysteine 781–cysteine 792, cysteine 832–cysteine 922, cysteine 957–cysteine 1002, cysteine 1059–cysteine 1108, cysteine 1070–cysteine 1092, and cysteine 1091–cysteine 1095. 3 N-linked (GlcNAc...) asparagine; by host glycosylation sites follow: asparagine 862, asparagine 985, and asparagine 1001. A helical membrane pass occupies residues 1135 to 1155 (MLSEGGVPGIVAVFVVLELVI). The Lumenal portion of the chain corresponds to 1156 to 1164 (RRRPTTGSS). Residues 1165 to 1185 (VVWCGMVVLGLVVTGLVTIEG) form a helical membrane-spanning segment. Residues 1186-1189 (LCRY) lie on the Cytoplasmic side of the membrane. A helical membrane pass occupies residues 1190-1210 (VVAVGILMSMELGPEIVALVL). The Lumenal portion of the chain corresponds to 1211 to 1235 (LQAVFDMRTGLLVAFAVKRAYTTRE). Residues 1236–1256 (AVATYFLLLVLELGFPEASLS) form a helical membrane-spanning segment. The Cytoplasmic segment spans residues 1257–1295 (NIWKWADSLAMGALILQACGQEGRTRVGYLLAAMMTQKD). The helical transmembrane segment at 1296–1316 (MVIIHTGLTIFLSAATAMAVW) threads the bilayer. The Lumenal portion of the chain corresponds to 1317–1361 (SMIKGQRDQKGLSWATPLAGLLGGEGVGLRLLAFRKLAERRNRRS). The chain crosses the membrane as a helical span at residues 1362–1379 (FSEPLTVVGVMLTVASGM). Over 1380 to 1384 (VRHTS) the chain is Cytoplasmic. A helical transmembrane segment spans residues 1385 to 1405 (QEALCALVAGAFLLLMMVLGT). The Lumenal segment spans residues 1406-1456 (RKMQLTAEWCGEVEWNPDLVNEGGEVNLKVRQDAMGNLHLTEVEKEERAMA). An interacts with and activates NS3 protease region spans residues 1412–1451 (AEWCGEVEWNPDLVNEGGEVNLKVRQDAMGNLHLTEVEKE). Residues 1457-1477 (LWLLAGLVASAFHWAGILIVL) constitute an intramembrane region (helical). Topologically, residues 1478–2162 (AVWTLFEMLG…RMAERDAPEA (685 aa)) are lumenal. Residues 1492-1671 (SELVFSGQET…EAEKSRPEIP (180 aa)) form the Peptidase S7 domain. Active-site charge relay system; for serine protease NS3 activity residues include histidine 1545, aspartate 1569, and serine 1629. One can recognise a Helicase ATP-binding domain in the interval 1677-1833 (TGWMSKGQIT…ESNGAIMSEE (157 aa)). 1690-1697 (MHPGSGKT) contacts ATP. Residues 1781 to 1784 (DEAH) carry the DEAH box motif. Positions 1844 to 2002 (GFDWITEYEG…TLRGPVATFY (159 aa)) constitute a Helicase C-terminal domain. At lysine 1885 the chain carries N6-acetyllysine; by host. A helical transmembrane segment spans residues 2163–2183 (FLTIVEVAVLGVATLGILWCF). Residues 2184–2191 (VARASVSR) lie on the Cytoplasmic side of the membrane. Positions 2192 to 2211 (MFLGTVVLFAALFLLWIGGV) form an intramembrane region, helical. Position 2212 (aspartate 2212) is a topological domain, lumenal. A helical transmembrane segment spans residues 2213–2233 (YGHMAGIALIFYTLLTVLQPE). Residues 2234-2246 (PGKQRSSDDNRLA) lie on the Cytoplasmic side of the membrane. Residues 2247–2267 (YFLLGLFSLAGLVTANEMGML) traverse the membrane as a helical segment. Residues 2268 to 2301 (DKTKADLAGLVWRGEQRHPAWEEWTNVDIQPARS) are Lumenal-facing. Residues 2302–2322 (WGTYVLIVSLFTPYMLHQLQT) constitute an intramembrane region (helical). Residues 2323-2345 (KIQQLVNSSVASGAQAMRDLGGG) are Lumenal-facing. Residues 2346-2366 (TPFFGVAGHVIALGVTSLVGA) constitute an intramembrane region (helical). The Lumenal segment spans residues 2367–2368 (TP). Residues 2369–2389 (MSLGLGVALAAFHLAIVASGL) form a helical membrane-spanning segment. Residues 2390-2432 (EAELTQRAHRVFFSAMVKNPMVDGDVINPFPDGETKPALYERR) are Cytoplasmic-facing. The chain crosses the membrane as a helical span at residues 2433–2453 (MSLILAIALCMGSVVLNRTAA). Residues 2454 to 2476 (SMTEAGAVGLAALGQLVHPETET) lie on the Lumenal side of the membrane. The helical transmembrane segment at 2477–2497 (LWTMPMACGMAGLVRGSFWGL) threads the bilayer. The Cytoplasmic segment spans residues 2498 to 3416 (LPMGHRLWLR…WDLKLESNII (919 aa)). One can recognise an mRNA cap 0-1 NS5-type MT domain in the interval 2514-2778 (GGAEGETLGD…EVDLGTGTRC (265 aa)). Serine 2569 is an S-adenosyl-L-methionine binding site. Residue serine 2569 is modified to Phosphoserine. The active-site For 2'-O-MTase activity is the lysine 2574. S-adenosyl-L-methionine contacts are provided by glycine 2599, tryptophan 2600, threonine 2617, isoleucine 2618, aspartate 2644, and valine 2645. Aspartate 2659 functions as the For 2'-O-MTase activity in the catalytic mechanism. Residue isoleucine 2660 coordinates S-adenosyl-L-methionine. Catalysis depends on for 2'-O-MTase activity residues lysine 2696 and glutamate 2732. Positions 2732 to 2736 (EMYFS) are interaction with host SCRIB. Tyrosine 2734 serves as a coordination point for S-adenosyl-L-methionine. Residues glutamate 2952, histidine 2956, cysteine 2961, and cysteine 2964 each coordinate Zn(2+). The RdRp catalytic domain maps to 3042-3191 (GLFYADDTAG…RPIDDRFGKA (150 aa)). Residues histidine 3226, cysteine 3242, and cysteine 3361 each contribute to the Zn(2+) site.

In the N-terminal section; belongs to the class I-like SAM-binding methyltransferase superfamily. mRNA cap 0-1 NS5-type methyltransferase family. As to quaternary structure, homodimer. Interacts (via N-terminus) with host EXOC1 (via C-terminus); this interaction results in EXOC1 degradation through the proteasome degradation pathway. In terms of assembly, forms heterodimers with envelope protein E in the endoplasmic reticulum and Golgi. Homodimer; in the endoplasmic reticulum and Golgi. Interacts with protein prM. Interacts with non-structural protein 1. As to quaternary structure, homodimer; Homohexamer when secreted. Interacts with envelope protein E. NS1 interacts with NS4B. Interacts with host complement protein CFH; this interaction leads to the degradation of C3. In terms of assembly, interacts (via N-terminus) with serine protease NS3. Forms a heterodimer with serine protease NS3. May form homooligomers. As to quaternary structure, forms a heterodimer with NS2B. Interacts with non-structural protein 2A (via N-terminus). Interacts with NS4B. Interacts with unphosphorylated RNA-directed RNA polymerase NS5; this interaction stimulates RNA-directed RNA polymerase NS5 guanylyltransferase activity. In terms of assembly, interacts with serine protease NS3. Homodimer. Interacts with host STAT2; this interaction inhibits the phosphorylation of the latter, and, when all viral proteins are present (polyprotein), targets STAT2 for degradation. Interacts with serine protease NS3. Post-translationally, specific enzymatic cleavages in vivo yield mature proteins. Cleavages in the lumen of endoplasmic reticulum are performed by host signal peptidase, whereas cleavages in the cytoplasmic side are performed by serine protease NS3. Signal cleavage at the 2K-4B site requires a prior NS3 protease-mediated cleavage at the 4A-2K site. In terms of processing, cleaved in post-Golgi vesicles by a host furin, releasing the mature small envelope protein M, and peptide pr. This cleavage is incomplete as up to 30% of viral particles still carry uncleaved prM. N-glycosylated. Post-translationally, N-glycosylated. The excreted form is glycosylated and this is required for efficient secretion of the protein from infected cells. In terms of processing, acetylated by host KAT5. Acetylation modulates NS3 RNA-binding and unwinding activities and plays an important positive role for viral replication. Phosphorylated on serines residues. This phosphorylation may trigger NS5 nuclear localization.

It localises to the virion. It is found in the host nucleus. The protein localises to the host cytoplasm. Its subcellular location is the host perinuclear region. The protein resides in the secreted. It localises to the virion membrane. It is found in the host endoplasmic reticulum membrane. The catalysed reaction is Selective hydrolysis of -Xaa-Xaa-|-Yaa- bonds in which each of the Xaa can be either Arg or Lys and Yaa can be either Ser or Ala.. It carries out the reaction RNA(n) + a ribonucleoside 5'-triphosphate = RNA(n+1) + diphosphate. It catalyses the reaction a ribonucleoside 5'-triphosphate + H2O = a ribonucleoside 5'-diphosphate + phosphate + H(+). The enzyme catalyses ATP + H2O = ADP + phosphate + H(+). The catalysed reaction is a 5'-end (5'-triphosphoguanosine)-ribonucleoside in mRNA + S-adenosyl-L-methionine = a 5'-end (N(7)-methyl 5'-triphosphoguanosine)-ribonucleoside in mRNA + S-adenosyl-L-homocysteine. It carries out the reaction a 5'-end (N(7)-methyl 5'-triphosphoguanosine)-ribonucleoside in mRNA + S-adenosyl-L-methionine = a 5'-end (N(7)-methyl 5'-triphosphoguanosine)-(2'-O-methyl-ribonucleoside) in mRNA + S-adenosyl-L-homocysteine + H(+). Its function is as follows. Plays a role in virus budding by binding to the cell membrane and gathering the viral RNA into a nucleocapsid that forms the core of a mature virus particle. During virus entry, may induce genome penetration into the host cytoplasm after hemifusion induced by the surface proteins. Can migrate to the cell nucleus where it modulates host functions. In terms of biological role, inhibits RNA silencing by interfering with host Dicer. Prevents premature fusion activity of envelope proteins in trans-Golgi by binding to envelope protein E at pH6.0. After virion release in extracellular space, gets dissociated from E dimers. Functionally, acts as a chaperone for envelope protein E during intracellular virion assembly by masking and inactivating envelope protein E fusion peptide. prM is the only viral peptide matured by host furin in the trans-Golgi network probably to avoid catastrophic activation of the viral fusion activity in acidic Golgi compartment prior to virion release. prM-E cleavage is inefficient, and many virions are only partially matured. These uncleaved prM would play a role in immune evasion. Its function is as follows. May play a role in virus budding. Exerts cytotoxic effects by activating a mitochondrial apoptotic pathway through M ectodomain. May display a viroporin activity. In terms of biological role, binds to host cell surface receptor and mediates fusion between viral and cellular membranes. Envelope protein is synthesized in the endoplasmic reticulum in the form of heterodimer with protein prM. They play a role in virion budding in the ER, and the newly formed immature particle is covered with 60 spikes composed of heterodimer between precursor prM and envelope protein E. The virion is transported to the Golgi apparatus where the low pH causes dissociation of PrM-E heterodimers and formation of E homodimers. prM-E cleavage is inefficient, and many virions are only partially matured. These uncleaved prM would play a role in immune evasion. Involved in immune evasion, pathogenesis and viral replication. Once cleaved off the polyprotein, is targeted to three destinations: the viral replication cycle, the plasma membrane and the extracellular compartment. Essential for viral replication. Required for formation of the replication complex and recruitment of other non-structural proteins to the ER-derived membrane structures. Excreted as a hexameric lipoparticle that plays a role against host immune response. Antagonizing the complement function. Binds to the host macrophages and dendritic cells. Inhibits signal transduction originating from Toll-like receptor 3 (TLR3). Functionally, component of the viral RNA replication complex that functions in virion assembly and antagonizes the host immune response. Its function is as follows. Required cofactor for the serine protease function of NS3. May have membrane-destabilizing activity and form viroporins. In terms of biological role, displays three enzymatic activities: serine protease, NTPase and RNA helicase. NS3 serine protease, in association with NS2B, performs its autocleavage and cleaves the polyprotein at dibasic sites in the cytoplasm: C-prM, NS2A-NS2B, NS2B-NS3, NS3-NS4A, NS4A-2K and NS4B-NS5. NS3 RNA helicase binds RNA and unwinds dsRNA in the 3' to 5' direction. Regulates the ATPase activity of the NS3 helicase activity. NS4A allows NS3 helicase to conserve energy during unwinding. Functionally, functions as a signal peptide for NS4B and is required for the interferon antagonism activity of the latter. Its function is as follows. Induces the formation of ER-derived membrane vesicles where the viral replication takes place. Inhibits interferon (IFN)-induced host STAT1 phosphorylation and nuclear translocation, thereby preventing the establishment of cellular antiviral state by blocking the IFN-alpha/beta pathway. Inhibits STAT2 translocation in the nucleus after IFN-alpha treatment. In terms of biological role, replicates the viral (+) and (-) RNA genome, and performs the capping of genomes in the cytoplasm. NS5 methylates viral RNA cap at guanine N-7 and ribose 2'-O positions. Besides its role in RNA genome replication, also prevents the establishment of cellular antiviral state by blocking the interferon-alpha/beta (IFN-alpha/beta) signaling pathway. Inhibits host TYK2 and STAT2 phosphorylation, thereby preventing activation of JAK-STAT signaling pathway. The protein is Genome polyprotein of Homo sapiens (Human).